A 280-amino-acid chain; its full sequence is Cyanocobalamin reductase / alkylcobalamin dealkylase (280 aa).

Residues D104, 115 to 118 (ILAQ), 129 to 131 (YYQ), C149, and I160 contribute to the substrate site. S245, S247, S273, and S277 each carry phosphoserine. Positions 256–280 (LSKKPQNPRRGWLSPTVSPPISPGP) are disordered.

The protein belongs to the MMACHC family. As to quaternary structure, monomer in the absence of bound substrate. Homodimer; dimerization is triggered by binding to FMN or adenosylcobalamin. Interacts with LMBRD1 and ABCD4; the interaction ensures the transport of cobalamin from the lysosome to the cytoplasm. Forms a multiprotein complex with MMADHC, MTR and MTRR; the interaction with MTR could modulate MMACHC-dependent processing of cobalamin. Heterodimer with MMADHC; the interaction might play a role in the regulation of the balance between AdoCbl and MeCbl synthesis. The cofactor is FAD. FMN serves as cofactor.

It localises to the cytoplasm. The protein resides in the cytosol. The catalysed reaction is 2 cob(II)alamin-[cyanocobalamin reductase] + 2 hydrogen cyanide + NADP(+) = 2 cyanocob(III)alamin + 2 apo-[cyanocobalamin reductase] + NADPH + H(+). It carries out the reaction apo-[alkylcobalamin reductase] + an R-cob(III)alamin + glutathione = cob(I)alamin-[alkylcobalamin reductase] + an S-substituted glutathione + H(+). It catalyses the reaction apo-[alkylcobalamin reductase] + methylcob(III)alamin + glutathione = S-methyl glutathione + cob(I)alamin-[alkylcobalamin reductase] + H(+). The enzyme catalyses apo-[alkylcobalamin reductase] + adenosylcob(III)alamin + glutathione = S-adenosylglutathione + cob(I)alamin-[alkylcobalamin reductase] + H(+). In terms of biological role, cobalamin (vitamin B12) cytosolic chaperone that catalyzes the reductive decyanation of cyanocob(III)alamin (cyanocobalamin, CNCbl) to yield cob(II)alamin and cyanide, using FAD or FMN as cofactors and NADPH as cosubstrate. Cyanocobalamin constitutes the inactive form of vitamin B12 introduced from the diet, and is converted into the active cofactors methylcobalamin (MeCbl) involved in methionine biosynthesis, and 5'-deoxyadenosylcobalamin (AdoCbl) involved in the TCA cycle. Forms a complex with the lysosomal transporter ABCD4 and its chaperone LMBRD1, to transport cobalamin across the lysosomal membrane into the cytosol. The processing of cobalamin in the cytosol occurs in a multiprotein complex composed of at least MMACHC, MMADHC, MTRR (methionine synthase reductase) and MTR (methionine synthase) which may contribute to shuttle safely and efficiently cobalamin towards MTR in order to produce methionine. Also acts as a glutathione transferase by catalyzing the dealkylation of the alkylcob(III)alamins MeCbl and AdoCbl, using the thiolate of glutathione for nucleophilic displacement to generate cob(I)alamin and the corresponding glutathione thioether. The conversion of incoming MeCbl or AdoCbl into a common intermediate cob(I)alamin is necessary to meet the cellular needs for both cofactors. Cysteine and homocysteine cannot substitute for glutathione in this reaction. The protein is Cyanocobalamin reductase / alkylcobalamin dealkylase (MMACHC) of Bos taurus (Bovine).